Here is a 657-residue protein sequence, read N- to C-terminus: tRNA 5-methylaminomethyl-2-thiouridine biosynthesis bifunctional protein MnmC (657 aa).

The segment at 1–233 is tRNA (mnm(5)s(2)U34)-methyltransferase; that stretch reads MPRALEPAEP…KWQMTVASFR (233 aa). The segment at 257-657 is FAD-dependent cmnm(5)s(2)U34 oxidoreductase; the sequence is IGAGLAGCAV…LRALRHGHTG (401 aa).

It in the N-terminal section; belongs to the methyltransferase superfamily. tRNA (mnm(5)s(2)U34)-methyltransferase family. This sequence in the C-terminal section; belongs to the DAO family. FAD serves as cofactor.

The protein resides in the cytoplasm. It carries out the reaction 5-aminomethyl-2-thiouridine(34) in tRNA + S-adenosyl-L-methionine = 5-methylaminomethyl-2-thiouridine(34) in tRNA + S-adenosyl-L-homocysteine + H(+). Its function is as follows. Catalyzes the last two steps in the biosynthesis of 5-methylaminomethyl-2-thiouridine (mnm(5)s(2)U) at the wobble position (U34) in tRNA. Catalyzes the FAD-dependent demodification of cmnm(5)s(2)U34 to nm(5)s(2)U34, followed by the transfer of a methyl group from S-adenosyl-L-methionine to nm(5)s(2)U34, to form mnm(5)s(2)U34. In Cupriavidus necator (strain ATCC 17699 / DSM 428 / KCTC 22496 / NCIMB 10442 / H16 / Stanier 337) (Ralstonia eutropha), this protein is tRNA 5-methylaminomethyl-2-thiouridine biosynthesis bifunctional protein MnmC.